We begin with the raw amino-acid sequence, 102 residues long: Small ribosomal subunit protein uS10 (102 aa).

This sequence belongs to the universal ribosomal protein uS10 family. Part of the 30S ribosomal subunit.

Involved in the binding of tRNA to the ribosomes. This is Small ribosomal subunit protein uS10 from Allorhizobium ampelinum (strain ATCC BAA-846 / DSM 112012 / S4) (Agrobacterium vitis (strain S4)).